Consider the following 335-residue polypeptide: Probable nicotianamine synthase 2 (335 aa).

It belongs to the nicotianamine synthase (NAS)-like family.

It carries out the reaction 3 S-adenosyl-L-methionine = nicotianamine + 3 S-methyl-5'-thioadenosine + 3 H(+). Functionally, synthesizes nicotianamine, a polyamine that is the first intermediate in the synthesis of the phytosiderophores of the mugineic acid type found in gramineae which serves as a sensor for the physiological iron status within the plant, and/or might be involved in the transport of iron. This Hordeum vulgare (Barley) protein is Probable nicotianamine synthase 2 (NAS2).